An 851-amino-acid polypeptide reads, in one-letter code: DNA mismatch repair protein MutS (851 aa).

602-609 (GPNMSGKS) provides a ligand contact to ATP.

The protein belongs to the DNA mismatch repair MutS family.

In terms of biological role, this protein is involved in the repair of mismatches in DNA. It is possible that it carries out the mismatch recognition step. This protein has a weak ATPase activity. This is DNA mismatch repair protein MutS from Streptococcus pyogenes serotype M49 (strain NZ131).